The primary structure comprises 244 residues: Cell division protein DivIB (244 aa).

The Cytoplasmic segment spans residues 1 to 6; it reads MKIKWP. A helical transmembrane segment spans residues 7 to 27; the sequence is LQLWISLAVFVTIAVGTLLLL. One can recognise a POTRA domain in the interval 28-104; that stretch reads QPWQTIKTVT…IDIAEKVTAG (77 aa). Topologically, residues 28-244 are extracellular; it reads QPWQTIKTVT…KADNKAHQKQ (217 aa).

It belongs to the FtsQ/DivIB family. DivIB subfamily.

The protein resides in the cell membrane. In terms of biological role, cell division protein that may be involved in stabilizing or promoting the assembly of the division complex. This Leuconostoc kimchii (strain IMSNU 11154 / KCTC 2386 / IH25) protein is Cell division protein DivIB.